Reading from the N-terminus, the 111-residue chain is PHD finger-like domain-containing protein 5A (111 aa).

This sequence belongs to the PHF5 family.

This chain is PHD finger-like domain-containing protein 5A, found in Drosophila melanogaster (Fruit fly).